A 331-amino-acid polypeptide reads, in one-letter code: 2-hydroxyacid dehydrogenase homolog (331 aa).

Residues 154–155 (KI), 232–234 (TSR), and aspartate 258 each bind NAD(+). Arginine 234 is a catalytic residue. Residue glutamate 263 is part of the active site. Catalysis depends on histidine 295, which acts as the Proton donor. Residue 295 to 298 (HQAF) coordinates NAD(+).

It belongs to the D-isomer specific 2-hydroxyacid dehydrogenase family.

The chain is 2-hydroxyacid dehydrogenase homolog (ddh) from Haemophilus influenzae (strain ATCC 51907 / DSM 11121 / KW20 / Rd).